A 469-amino-acid chain; its full sequence is GDP-fucose protein O-fucosyltransferase 2 (469 aa).

Residues 1–18 (MKFIIVLLLFFFFKVIDR) form the signal peptide. GDP-beta-L-fucose contacts are provided by residues 56–60 (GEGFN), 277–279 (HLR), and 373–374 (RF). The active-site Proton acceptor is the E57.

The protein belongs to the glycosyltransferase 68 family.

The protein localises to the endoplasmic reticulum. It carries out the reaction L-seryl-[protein] + GDP-beta-L-fucose = 3-O-(alpha-L-fucosyl)-L-seryl-[protein] + GDP + H(+). The catalysed reaction is L-threonyl-[protein] + GDP-beta-L-fucose = 3-O-(alpha-L-fucosyl)-L-threonyl-[protein] + GDP + H(+). Its pathway is protein modification; protein glycosylation. Functionally, catalyzes the reaction that attaches fucose through an O-glycosidic linkage to a conserved serine or threonine residue in the consensus sequence C1-X-X-S/T-C2 of thrombospondin type I repeats (TSRs) where C1 and C2 are the first and second cysteines of the repeat, respectively. O-fucosylates sporozoite proteins CSP and TRAP. O-fucosylation regulates stability and intracellular trafficking of TRAP but not of CSP. Probably by regulating protein O-fucosylation, may play a role in parasite transmission to the mosquito vector and/or infection of the vertebrate host hepatocytes; however, POFUT2 involvement in transmission/infection is controversial. The sequence is that of GDP-fucose protein O-fucosyltransferase 2 from Plasmodium falciparum (isolate NF54).